The primary structure comprises 344 residues: Arginine N-succinyltransferase (344 aa).

Leucine 125 serves as a coordination point for succinyl-CoA. Histidine 229 (proton donor) is an active-site residue.

This sequence belongs to the arginine N-succinyltransferase family.

The catalysed reaction is succinyl-CoA + L-arginine = N(2)-succinyl-L-arginine + CoA + H(+). The protein operates within amino-acid degradation; L-arginine degradation via AST pathway; L-glutamate and succinate from L-arginine: step 1/5. In terms of biological role, catalyzes the transfer of succinyl-CoA to arginine to produce N(2)-succinylarginine. The protein is Arginine N-succinyltransferase of Shigella dysenteriae serotype 1 (strain Sd197).